Here is a 279-residue protein sequence, read N- to C-terminus: 3-methyl-2-oxobutanoate hydroxymethyltransferase 2 (279 aa).

Residues Asp58 and Asp97 each contribute to the Mg(2+) site. Residues Asp58–Ser59, Asp97, and Lys126 contribute to the 3-methyl-2-oxobutanoate site. Glu128 is a binding site for Mg(2+). The active-site Proton acceptor is the Glu195.

Belongs to the PanB family. As to quaternary structure, homodecamer; pentamer of dimers. The cofactor is Mg(2+).

It localises to the cytoplasm. The catalysed reaction is 3-methyl-2-oxobutanoate + (6R)-5,10-methylene-5,6,7,8-tetrahydrofolate + H2O = 2-dehydropantoate + (6S)-5,6,7,8-tetrahydrofolate. The protein operates within cofactor biosynthesis; (R)-pantothenate biosynthesis; (R)-pantoate from 3-methyl-2-oxobutanoate: step 1/2. Catalyzes the reversible reaction in which hydroxymethyl group from 5,10-methylenetetrahydrofolate is transferred onto alpha-ketoisovalerate to form ketopantoate. The chain is 3-methyl-2-oxobutanoate hydroxymethyltransferase 2 from Methylibium petroleiphilum (strain ATCC BAA-1232 / LMG 22953 / PM1).